A 79-amino-acid polypeptide reads, in one-letter code: Probable [Fe-S]-dependent transcriptional repressor (79 aa).

Iron-sulfur cluster is bound by residues Cys-56, Cys-61, Cys-64, and Cys-70.

Belongs to the FeoC family.

In terms of biological role, may function as a transcriptional regulator that controls feoABC expression. This Serratia proteamaculans (strain 568) protein is Probable [Fe-S]-dependent transcriptional repressor.